A 293-amino-acid chain; its full sequence is Ribosomal protein L11 methyltransferase (293 aa).

The S-adenosyl-L-methionine site is built by Thr-145, Gly-166, Asp-188, and Asn-230.

Belongs to the methyltransferase superfamily. PrmA family.

Its subcellular location is the cytoplasm. The catalysed reaction is L-lysyl-[protein] + 3 S-adenosyl-L-methionine = N(6),N(6),N(6)-trimethyl-L-lysyl-[protein] + 3 S-adenosyl-L-homocysteine + 3 H(+). Its function is as follows. Methylates ribosomal protein L11. This chain is Ribosomal protein L11 methyltransferase, found in Salmonella agona (strain SL483).